A 515-amino-acid polypeptide reads, in one-letter code: Heavy metal-associated isoprenylated plant protein 41 (515 aa).

Positions 376–444 (KQRIVLKMDM…KVCMTTIITV (69 aa)) constitute an HMA domain. Cys-512 is modified (cysteine methyl ester). Cys-512 carries S-farnesyl cysteine lipidation. A propeptide spans 513-515 (RIL) (removed in mature form).

This sequence belongs to the HIPP family.

Heavy-metal-binding protein. The sequence is that of Heavy metal-associated isoprenylated plant protein 41 from Arabidopsis thaliana (Mouse-ear cress).